A 538-amino-acid chain; its full sequence is Bifunctional purine biosynthesis protein PurH (538 aa).

The MGS-like domain occupies 8-158 (IPAPDKVKIR…KNHAYVTVVT (151 aa)).

The protein belongs to the PurH family.

It carries out the reaction (6R)-10-formyltetrahydrofolate + 5-amino-1-(5-phospho-beta-D-ribosyl)imidazole-4-carboxamide = 5-formamido-1-(5-phospho-D-ribosyl)imidazole-4-carboxamide + (6S)-5,6,7,8-tetrahydrofolate. It catalyses the reaction IMP + H2O = 5-formamido-1-(5-phospho-D-ribosyl)imidazole-4-carboxamide. It functions in the pathway purine metabolism; IMP biosynthesis via de novo pathway; 5-formamido-1-(5-phospho-D-ribosyl)imidazole-4-carboxamide from 5-amino-1-(5-phospho-D-ribosyl)imidazole-4-carboxamide (10-formyl THF route): step 1/1. The protein operates within purine metabolism; IMP biosynthesis via de novo pathway; IMP from 5-formamido-1-(5-phospho-D-ribosyl)imidazole-4-carboxamide: step 1/1. The sequence is that of Bifunctional purine biosynthesis protein PurH from Agrobacterium fabrum (strain C58 / ATCC 33970) (Agrobacterium tumefaciens (strain C58)).